A 500-amino-acid polypeptide reads, in one-letter code: UDP-GalNAc:beta-1,3-N-acetylgalactosaminyltransferase 2 (500 aa).

Topologically, residues 1-6 (MRNWLV) are cytoplasmic. The chain crosses the membrane as a helical; Signal-anchor for type II membrane protein span at residues 7-23 (LLCPCVLGAALHLWLRL). The Lumenal segment spans residues 24-500 (RSPPPACASG…CGDPCRCQAR (477 aa)). N-linked (GlcNAc...) asparagine glycosylation is found at N116 and N174.

The protein belongs to the glycosyltransferase 31 family. In terms of processing, N-glycosylated. As to expression, expressed in all tissues examined, but at highest levels in testis, adipose tissue, skeletal muscle and ovary.

Its subcellular location is the golgi apparatus membrane. The protein resides in the endoplasmic reticulum. The enzyme catalyses 3-O-(N-acetyl-beta-D-glucosaminyl-(1-&gt;4)-alpha-D-mannosyl)-L-threonyl-[protein] + UDP-N-acetyl-alpha-D-galactosamine = 3-O-[beta-D-GalNAc-(1-&gt;3)-beta-D-GlcNAc-(1-&gt;4)-alpha-D-Man]-L-Thr-[protein] + UDP + H(+). It participates in protein modification; protein glycosylation. In terms of biological role, beta-1,3-N-acetylgalactosaminyltransferase that synthesizes a unique carbohydrate structure, GalNAc-beta-1-3GlcNAc, on N- and O-glycans. Has no galactose nor galactosaminyl transferase activity toward any acceptor substrate. Involved in alpha-dystroglycan (DAG1) glycosylation: acts coordinately with GTDC2/POMGnT2 to synthesize a GalNAc-beta3-GlcNAc-beta-terminus at the 4-position of protein O-mannose in the biosynthesis of the phosphorylated O-mannosyl trisaccharide (N-acetylgalactosamine-beta-3-N-acetylglucosamine-beta-4-(phosphate-6-)mannose), a carbohydrate structure present in alpha-dystroglycan, which is required for binding laminin G-like domain-containing extracellular proteins with high affinity. This is UDP-GalNAc:beta-1,3-N-acetylgalactosaminyltransferase 2 (B3GALNT2) from Homo sapiens (Human).